The primary structure comprises 194 residues: NAD(P)H-quinone oxidoreductase subunit I (194 aa).

4Fe-4S ferredoxin-type domains follow at residues 55 to 84 (GRIH…VDWE) and 95 to 124 (NHYS…MTEE). [4Fe-4S] cluster is bound by residues cysteine 64, cysteine 67, cysteine 70, cysteine 74, cysteine 104, cysteine 107, cysteine 110, and cysteine 114. Positions 173 to 194 (DLPANAPRPGARPEDLVEKTEA) are disordered. Over residues 183-194 (ARPEDLVEKTEA) the composition is skewed to basic and acidic residues.

It belongs to the complex I 23 kDa subunit family. As to quaternary structure, NDH-1 is composed of at least 11 different subunits. [4Fe-4S] cluster serves as cofactor.

The protein resides in the cellular thylakoid membrane. The enzyme catalyses a plastoquinone + NADH + (n+1) H(+)(in) = a plastoquinol + NAD(+) + n H(+)(out). It carries out the reaction a plastoquinone + NADPH + (n+1) H(+)(in) = a plastoquinol + NADP(+) + n H(+)(out). NDH-1 shuttles electrons from an unknown electron donor, via FMN and iron-sulfur (Fe-S) centers, to quinones in the respiratory and/or the photosynthetic chain. The immediate electron acceptor for the enzyme in this species is believed to be plastoquinone. Couples the redox reaction to proton translocation, and thus conserves the redox energy in a proton gradient. This is NAD(P)H-quinone oxidoreductase subunit I from Nostoc sp. (strain PCC 7120 / SAG 25.82 / UTEX 2576).